A 332-amino-acid polypeptide reads, in one-letter code: Mitochondrial glycine transporter (332 aa).

Solcar repeat units lie at residues 11–94, 121–205, and 235–319; these read SSSY…LRQN, LSNL…LKKR, and TSAS…LIRR. 6 helical membrane passes run 17 to 42, 69 to 95, 127 to 152, 180 to 203, 239 to 265, and 294 to 312; these read FGAGLGSGILSAVLLQPADLLKTRVQ, GTVPSALRTGFGSAIYFTSLNALRQNV, LTTGAVARAGAGFILMPMTIIKVRYE, GFGATAIRDAPYAGLYVLFYEELK, INFGSGVLAAGLATAITNPFDAIKTRI, and GLGLRMGRKAVSSALAWTI.

This sequence belongs to the mitochondrial carrier (TC 2.A.29) family. SLC25A38 subfamily.

It localises to the mitochondrion inner membrane. It catalyses the reaction glycine(in) = glycine(out). Its function is as follows. Mitochondrial glycine transporter that imports glycine into the mitochondrial matrix. Plays an important role in providing glycine for the first enzymatic step in heme biosynthesis, the condensation of glycine with succinyl-CoA to produce 5-aminolevulinate (ALA) in the mitochondrial matrix. This chain is Mitochondrial glycine transporter, found in Botryotinia fuckeliana (strain B05.10) (Noble rot fungus).